A 378-amino-acid chain; its full sequence is MLNFKTENTKYSLEEYTRYSKHLVLPQIQLEGQERLKEAKVLFIGAGGLGSPGIIYLAAAGIGSIGIIDDDIIDLSNLQRQILYRCNDIGYSKVEIAKKKILDLNPQCIVTVFKTRLSYENSIDIIRQYDIIIDGSDNFDTRYLLNDTCLELNKIHIYGAIFQFEGQVSVFNYQGGPVYRDFYSETENKESARDTCSNSGVLGLLPGIVGTLQATEAVKIVLGYKSILSGTILTYNSLTSSFNKFKIINTKFVLSTKKHWNKYYGSKSSTFVREISVIQLQKFLISRNPQYILIDVRNHEEYHKSHLIHSLNLPLQKIKGMNYSHINLQDKICFVYCSLDSRSIFASKFLIAQKLNIVRVRGGLNAWKNIIGDLDWTL.

ATP is bound by residues Gly-48, Asp-69, 76–80 (SNLQR), Lys-93, and 137–138 (DN). A Rhodanese domain is found at 287-376 (RNPQYILIDV…WKNIIGDLDW (90 aa)).

This sequence belongs to the HesA/MoeB/ThiF family.

Its subcellular location is the plastid. It is found in the chloroplast. The catalysed reaction is [molybdopterin-synthase sulfur-carrier protein]-C-terminal Gly-Gly + ATP + H(+) = [molybdopterin-synthase sulfur-carrier protein]-C-terminal Gly-Gly-AMP + diphosphate. It participates in cofactor biosynthesis; molybdopterin biosynthesis. Its function is as follows. Catalyzes the adenylation by ATP of the carboxyl group of the C-terminal glycine of sulfur carrier protein moaD. The polypeptide is Probable molybdopterin-synthase adenylyltransferase (moeB) (Pyropia yezoensis (Susabi-nori)).